The following is a 331-amino-acid chain: Phosphate acyltransferase (331 aa).

The protein belongs to the PlsX family. Homodimer. Probably interacts with PlsY.

Its subcellular location is the cytoplasm. The catalysed reaction is a fatty acyl-[ACP] + phosphate = an acyl phosphate + holo-[ACP]. It functions in the pathway lipid metabolism; phospholipid metabolism. Functionally, catalyzes the reversible formation of acyl-phosphate (acyl-PO(4)) from acyl-[acyl-carrier-protein] (acyl-ACP). This enzyme utilizes acyl-ACP as fatty acyl donor, but not acyl-CoA. The sequence is that of Phosphate acyltransferase from Mesoplasma florum (strain ATCC 33453 / NBRC 100688 / NCTC 11704 / L1) (Acholeplasma florum).